A 954-amino-acid polypeptide reads, in one-letter code: Glycine dehydrogenase (decarboxylating) (954 aa).

At Lys-701 the chain carries N6-(pyridoxal phosphate)lysine.

Belongs to the GcvP family. In terms of assembly, the glycine cleavage system is composed of four proteins: P, T, L and H. Pyridoxal 5'-phosphate serves as cofactor.

The enzyme catalyses N(6)-[(R)-lipoyl]-L-lysyl-[glycine-cleavage complex H protein] + glycine + H(+) = N(6)-[(R)-S(8)-aminomethyldihydrolipoyl]-L-lysyl-[glycine-cleavage complex H protein] + CO2. The glycine cleavage system catalyzes the degradation of glycine. The P protein binds the alpha-amino group of glycine through its pyridoxal phosphate cofactor; CO(2) is released and the remaining methylamine moiety is then transferred to the lipoamide cofactor of the H protein. The protein is Glycine dehydrogenase (decarboxylating) of Bordetella parapertussis (strain 12822 / ATCC BAA-587 / NCTC 13253).